The sequence spans 255 residues: MSMEDPFFVVKGEVQKAVNTAQGLFQRWTELLQDPSTATREEIDWTTNELRNNLRSIEWDLEDLDETISIVEANPRKFNLDATELSIRKAFITSTRQVVRDMKDQMSTSSVQALAERKNRQALLGDSGSQNWSTGTTDKYGRLDRELQRANSHFIEEQQAQQQLIVEQQDEQLELVSGSIGVLKNMSQRIGGELEEQAVMLEDFSHELESTQSRLDNVMKKLAKVSHMTSDRRQWCAIAILFAVLLVVLILFLVL.

Position 2 is an N-acetylserine (S2). S2 is subject to Phosphoserine. The segment at 2-168 (SMEDPFFVVK…QAQQQLIVEQ (167 aa)) is required for interaction with VPS51. Over 2–234 (SMEDPFFVVK…VSHMTSDRRQ (233 aa)) the chain is Cytoplasmic. Residues 41-74 (EEIDWTTNELRNNLRSIEWDLEDLDETISIVEAN) are a coiled coil. Phosphoserine occurs at positions 129 and 152. The t-SNARE coiled-coil homology domain maps to 163–225 (QLIVEQQDEQ…DNVMKKLAKV (63 aa)). The chain crosses the membrane as a helical; Anchor for type IV membrane protein span at residues 235–255 (WCAIAILFAVLLVVLILFLVL).

Belongs to the syntaxin family. Identified in a complex containing STX6, STX12, VAMP4 and VTI1A. Binds EEA1. Interacts with VPS45A. Interacts with MARCHF2; the interaction promotes MARCHF2-mediated ubiquitination and degradation of CFTR. Interacts with MARCHF3. Interacts with GOPC. Interacts with BLTP3B (via C-terminal coiled-coil domain). Interacts with BAIAP3; this interaction is increased in the presence of calcium. Interacts with VPS13B.

The protein localises to the golgi apparatus membrane. It is found in the golgi apparatus. It localises to the trans-Golgi network membrane. Its subcellular location is the recycling endosome membrane. Its function is as follows. SNARE promoting movement of transport vesicles to target membranes. Targets endosomes to the trans-Golgi network, and may therefore function in retrograde trafficking. Together with SNARE STX12, promotes movement of vesicles from endosomes to the cell membrane, and may therefore function in the endocytic recycling pathway. In Homo sapiens (Human), this protein is Syntaxin-6 (STX6).